The following is a 315-amino-acid chain: Tyrosine recombinase XerC (315 aa).

In terms of domain architecture, Core-binding (CB) spans 13 to 104 (ADLAAAREEW…GVRSLLRHLE (92 aa)). The region spanning 125–309 (SLPKPLTADD…DTQRLLEVYD (185 aa)) is the Tyr recombinase domain. Residues Arg-168, Lys-193, His-261, Arg-264, and His-287 contribute to the active site. Tyr-296 acts as the O-(3'-phospho-DNA)-tyrosine intermediate in catalysis.

This sequence belongs to the 'phage' integrase family. XerC subfamily. As to quaternary structure, forms a cyclic heterotetrameric complex composed of two molecules of XerC and two molecules of XerD.

The protein resides in the cytoplasm. Functionally, site-specific tyrosine recombinase, which acts by catalyzing the cutting and rejoining of the recombining DNA molecules. The XerC-XerD complex is essential to convert dimers of the bacterial chromosome into monomers to permit their segregation at cell division. It also contributes to the segregational stability of plasmids. The chain is Tyrosine recombinase XerC from Brucella suis biovar 1 (strain 1330).